Consider the following 634-residue polypeptide: Fluorothreonine transaldolase (634 aa).

Pyridoxal 5'-phosphate contacts are provided by Y67, H221, and H247. Residue K248 is modified to N6-(pyridoxal phosphate)lysine. R375 lines the pyridoxal 5'-phosphate pocket. The interval 428 to 456 is disordered; the sequence is TGDPASAAGPPARERYAPPTAPAGHPARP.

The protein belongs to the SHMT family. The cofactor is pyridoxal 5'-phosphate.

It catalyses the reaction fluoroacetaldehyde + L-threonine = 4-fluoro-L-threonine + acetaldehyde. In terms of biological role, transaldolase that catalyzes the final step in 4-fluorothreonine biosynthesis. Mediates a L-threonine/fluoroaceldehyde to 4-fluoro-L-threonine/acetaldehyde crossover reaction. Can also convert chloroacetaldehyde into 4-chloro-L-threonine. Does not use glycine as a substrate. The chain is Fluorothreonine transaldolase from Streptantibioticus cattleyicolor (Streptomyces cattleya).